The primary structure comprises 535 residues: Bifunctional purine biosynthesis protein PurH (535 aa).

Positions 6–151 (TRLPIRRALI…KNHKDVAIVV (146 aa)) constitute an MGS-like domain.

This sequence belongs to the PurH family.

The catalysed reaction is (6R)-10-formyltetrahydrofolate + 5-amino-1-(5-phospho-beta-D-ribosyl)imidazole-4-carboxamide = 5-formamido-1-(5-phospho-D-ribosyl)imidazole-4-carboxamide + (6S)-5,6,7,8-tetrahydrofolate. The enzyme catalyses IMP + H2O = 5-formamido-1-(5-phospho-D-ribosyl)imidazole-4-carboxamide. It participates in purine metabolism; IMP biosynthesis via de novo pathway; 5-formamido-1-(5-phospho-D-ribosyl)imidazole-4-carboxamide from 5-amino-1-(5-phospho-D-ribosyl)imidazole-4-carboxamide (10-formyl THF route): step 1/1. The protein operates within purine metabolism; IMP biosynthesis via de novo pathway; IMP from 5-formamido-1-(5-phospho-D-ribosyl)imidazole-4-carboxamide: step 1/1. This chain is Bifunctional purine biosynthesis protein PurH, found in Pseudomonas aeruginosa (strain LESB58).